We begin with the raw amino-acid sequence, 429 residues long: MKKQRNLRSMAAQAVEQVVEQGQSLSNILPPLQQKVSDKDKALLQELCFGVLRTLSQLDWLINKSMARPMTGKQRTVHYLIMVGLYQLLYTRIPPHAALAETVEGAIAIKRPQLKGLINGVLRQFQRQQEELLAEFNTSDARYLHPSWLLKRLQKAYPEQWQSIVEANNQRPPMWLRINRTHHSRDTWLALLDEAGMKGFPHADYPDAVRLETPAPVHALPGFEDGWVTVQDASAQGCMTWLAPQNGEHILDLCAAPGGKTTHILEVAPEAQVVAVDIDEQRLSRVYDNLKRLGMKATVKQGDGRYPSQWCGEQQFDRILLDAPCSATGVIRRHPDIKWLRRDRDIPELAQLQSEILDAIWPHLKSGGTLVYATCSVLPEENSLQIKAFLQRTADAELCETGTPEQPGKQNLPGAEEGDGFFYAKLIKK.

S-adenosyl-L-methionine is bound by residues 254–260 (CAAPGGK), D277, D303, and D322. The active-site Nucleophile is the C375.

The protein belongs to the class I-like SAM-binding methyltransferase superfamily. RsmB/NOP family.

The protein localises to the cytoplasm. The enzyme catalyses cytidine(967) in 16S rRNA + S-adenosyl-L-methionine = 5-methylcytidine(967) in 16S rRNA + S-adenosyl-L-homocysteine + H(+). Its function is as follows. Specifically methylates the cytosine at position 967 (m5C967) of 16S rRNA. This is Ribosomal RNA small subunit methyltransferase B from Escherichia coli O157:H7.